We begin with the raw amino-acid sequence, 205 residues long: Mitotic spindle assembly checkpoint protein MAD2A (205 aa).

Alanine 2 is modified (N-acetylalanine). Phosphoserine is present on residues serine 6, serine 130, serine 170, serine 178, serine 185, and serine 195. The 184-residue stretch at 14-197 (RGSAEIVAEF…TTIHKVNSMV (184 aa)) folds into the HORMA domain. The required for assuming the closed conformation and for interaction with CDC20 stretch occupies residues 195–205 (SMVAYKIPVND).

The protein belongs to the MAD2 family. In terms of assembly, monomer and homodimer. Heterodimerizes with MAD2L1 in order to form a tetrameric MAD1L1-MAD2L1 core complex. In the closed and open conformation, interacts with MAD1L1. Formation of a heterotetrameric core complex containing two molecules each of MAD1L1 and of MAD2L1 promotes binding of another molecule of MAD2L1 to each MAD2L1, resulting in a heterohexamer. Interacts with MAD2L1BP. Interacts with ADAM17/TACE. Interacts with CDC20. Dimeric MAD2L1 in the closed conformation interacts with CDC20. Monomeric MAD2L1 in the open conformation does not interact with CDC20. CDC20 competes with MAD1L1 for MAD2L1 binding. In the closed conformation, interacts with BUB1B. Interacts with TTK. Interacts with TPR. Binds to UBD (via ubiquitin-like 1 domain) during mitosis. Interacts with isoform 1 and isoform 2 of NEK2. Interacts with HSF1; this interaction occurs in mitosis. Interacts with isoform 3 of MAD1L1; this interaction leads to the cytoplasmic sequestration of MAD2L1. Post-translationally, phosphorylated on multiple serine residues. The level of phosphorylation varies during the cell cycle and is highest during mitosis. Phosphorylation abolishes interaction with MAD1L1 and reduces interaction with CDC20. Phosphorylated by NEK2.

It localises to the nucleus. The protein localises to the chromosome. The protein resides in the centromere. Its subcellular location is the kinetochore. It is found in the cytoplasm. It localises to the cytoskeleton. The protein localises to the spindle pole. Its function is as follows. Component of the spindle-assembly checkpoint that prevents the onset of anaphase until all chromosomes are properly aligned at the metaphase plate. In the closed conformation (C-MAD2) forms a heterotetrameric complex with MAD1L1 at unattached kinetochores during prometaphase, the complex recruits open conformation molecules of MAD2L1 (O-MAD2) and then promotes the conversion of O-MAD2 to C-MAD2. Required for the execution of the mitotic checkpoint which monitors the process of kinetochore-spindle attachment and inhibits the activity of the anaphase promoting complex by sequestering CDC20 until all chromosomes are aligned at the metaphase plate. The protein is Mitotic spindle assembly checkpoint protein MAD2A (MAD2L1) of Homo sapiens (Human).